A 387-amino-acid chain; its full sequence is Succinate--CoA ligase [ADP-forming] subunit beta (387 aa).

Positions 9-244 constitute an ATP-grasp domain; it reads KQLFAEYGIP…KTQEDETEVL (236 aa). Residues Lys46, 53-55, Gly102, and Glu107 each bind ATP; that span reads GRG. Positions 199 and 213 each coordinate Mg(2+). Substrate-binding positions include Asn264 and 321 to 323; that span reads GIV.

The protein belongs to the succinate/malate CoA ligase beta subunit family. Heterotetramer of two alpha and two beta subunits. Requires Mg(2+) as cofactor.

It carries out the reaction succinate + ATP + CoA = succinyl-CoA + ADP + phosphate. It catalyses the reaction GTP + succinate + CoA = succinyl-CoA + GDP + phosphate. The protein operates within carbohydrate metabolism; tricarboxylic acid cycle; succinate from succinyl-CoA (ligase route): step 1/1. In terms of biological role, succinyl-CoA synthetase functions in the citric acid cycle (TCA), coupling the hydrolysis of succinyl-CoA to the synthesis of either ATP or GTP and thus represents the only step of substrate-level phosphorylation in the TCA. The beta subunit provides nucleotide specificity of the enzyme and binds the substrate succinate, while the binding sites for coenzyme A and phosphate are found in the alpha subunit. The sequence is that of Succinate--CoA ligase [ADP-forming] subunit beta from Xylella fastidiosa (strain M23).